We begin with the raw amino-acid sequence, 293 residues long: MKI67 FHA domain-interacting nucleolar phosphoprotein (293 aa).

Residue Ala-2 is modified to N-acetylalanine. Residue Lys-38 forms a Glycyl lysine isopeptide (Lys-Gly) (interchain with G-Cter in SUMO2) linkage. Positions 45–123 constitute an RRM domain; sequence GVVYVRHLPN…RLLECHFMPP (79 aa). Arg-114 is subject to Omega-N-methylarginine; by PRMT1 and PRMT8. Lys-139 participates in a covalent cross-link: Glycyl lysine isopeptide (Lys-Gly) (interchain with G-Cter in SUMO2). The residue at position 145 (Ser-145) is a Phosphoserine. Glycyl lysine isopeptide (Lys-Gly) (interchain with G-Cter in SUMO2) cross-links involve residues Lys-179 and Lys-192. Residues 197–207 are compositionally biased toward polar residues; that stretch reads SKTNRQTSTKG. Residues 197 to 239 are disordered; the sequence is SKTNRQTSTKGQVLRKKKKKVSGTLDTPEKTVDSQGPTPVCTP. The residue at position 218 (Ser-218) is a Phosphoserine. Thr-223 carries the phosphothreonine modification. The tract at residues 226 to 269 is interaction with MKI67; that stretch reads KTVDSQGPTPVCTPTFLERRKSQVAELNDDDKDDEIVFKQPISC. Ser-230 carries the post-translational modification Phosphoserine. A phosphothreonine mark is found at Thr-234 and Thr-238. Residues Arg-244 and Arg-245 each carry the omega-N-methylated arginine; by PRMT1 and PRMT8 modification. Ser-247 carries the post-translational modification Phosphoserine. A Glycyl lysine isopeptide (Lys-Gly) (interchain with G-Cter in SUMO1); alternate cross-link involves residue Lys-271. Lys-271 is covalently cross-linked (Glycyl lysine isopeptide (Lys-Gly) (interchain with G-Cter in SUMO2); alternate). The tract at residues 271–293 is disordered; the sequence is KEEIQETQTPTHSRKKRRRSSNQ. Thr-279 is modified (phosphothreonine). Over residues 282 to 293 the composition is skewed to basic residues; that stretch reads HSRKKRRRSSNQ. An Omega-N-methylarginine; by PRMT1 and PRMT8 modification is found at Arg-284.

As to quaternary structure, binds to the FHA domain of MKI67; this interaction is enhanced in mitosis. Post-translationally, sequentially phosphorylated on Thr-238, Thr-234 and Ser-230. Thr-234 is phosphorylated only when Thr-238 is phosphorylated. Likewise, phosphorylation at Ser-230 requires that Thr-234 and Thr-238 are phosphorylated. Phosphorylation enhances MKI67 binding.

The protein localises to the nucleus. Its subcellular location is the nucleolus. The protein resides in the chromosome. The chain is MKI67 FHA domain-interacting nucleolar phosphoprotein (NIFK) from Homo sapiens (Human).